A 327-amino-acid chain; its full sequence is Putative pumilio homolog 19 (327 aa).

Positions methionine 1–arginine 324 constitute a PUM-HD domain. Pumilio repeat units follow at residues serine 79–alanine 114, isoleucine 115–glutamate 149, arginine 150–leucine 185, glutamate 186–valine 222, asparagine 223–glycine 260, and cysteine 261–tryptophan 295.

It is found in the cytoplasm. Its function is as follows. Sequence-specific RNA-binding protein that regulates translation and mRNA stability by binding the 3'-UTR of target mRNAs. This Arabidopsis thaliana (Mouse-ear cress) protein is Putative pumilio homolog 19 (APUM19).